Here is a 975-residue protein sequence, read N- to C-terminus: Lateral signaling target protein 2 homolog (975 aa).

Disordered stretches follow at residues proline 299–glutamate 458 and tyrosine 504–serine 523. 4 stretches are compositionally biased toward low complexity: residues serine 302–threonine 352, asparagine 365–asparagine 376, threonine 383–alanine 400, and proline 408–tryptophan 429. Residues serine 430–glutamate 458 show a composition bias toward acidic residues. Serine 540 and serine 541 each carry phosphoserine. Disordered regions lie at residues glutamate 556–serine 633 and aspartate 740–alanine 891. Residues glycine 564–arginine 602 are compositionally biased toward basic residues. The span at leucine 621 to serine 633 shows a compositional bias: low complexity. Over residues alanine 751–leucine 770 the composition is skewed to polar residues. At serine 796 the chain carries Phosphoserine. Low complexity-rich tracts occupy residues alanine 802–alanine 860 and proline 877–proline 890. An FYVE-type zinc finger spans residues aspartate 895–valine 955. Cysteine 901, cysteine 904, cysteine 917, cysteine 920, cysteine 925, cysteine 928, cysteine 947, and cysteine 950 together coordinate Zn(2+).

The protein belongs to the lst-2 family.

In terms of biological role, negative regulator of epidermal growth factor receptor (EGFR) signaling. This Drosophila sechellia (Fruit fly) protein is Lateral signaling target protein 2 homolog.